The following is a 743-amino-acid chain: Acetyl-coenzyme A synthetase, chloroplastic/glyoxysomal (743 aa).

Residues 1-84 (MKIGSPSSPI…LNAVVLGESL (84 aa)) constitute a chloroplast transit peptide. Residue D613 is part of the active site.

The protein belongs to the ATP-dependent AMP-binding enzyme family. In terms of tissue distribution, expressed in leaves, flower buds and young flowers.

It is found in the plastid. It localises to the chloroplast. The protein resides in the glyoxysome. It catalyses the reaction acetate + ATP + CoA = acetyl-CoA + AMP + diphosphate. Its function is as follows. Catalyzes the production of acetyl-CoA, an activated form of acetate that can be used for lipid synthesis or for energy generation. May play a limited role in the biosynthesis of lipids. This is Acetyl-coenzyme A synthetase, chloroplastic/glyoxysomal (ACS) from Arabidopsis thaliana (Mouse-ear cress).